Reading from the N-terminus, the 160-residue chain is MARPRPATFDKVKTVAENRRARFDYFIEQTYEAGLVLTGTEVKSLRFGEGSIAEAYAEVKDEXVWLVNANIPEFSHGNRFNHEAKRPRKLLLHEREINKLHGAVAREGMTLVPLSVYFNGKGRAKVELALAKGKKTHDKRETIKERDWKREQSRILRDRG.

The tract at residues 135 to 160 is disordered; the sequence is KTHDKRETIKERDWKREQSRILRDRG. Residues 138–160 are compositionally biased toward basic and acidic residues; sequence DKRETIKERDWKREQSRILRDRG.

Belongs to the SmpB family.

It is found in the cytoplasm. In terms of biological role, required for rescue of stalled ribosomes mediated by trans-translation. Binds to transfer-messenger RNA (tmRNA), required for stable association of tmRNA with ribosomes. tmRNA and SmpB together mimic tRNA shape, replacing the anticodon stem-loop with SmpB. tmRNA is encoded by the ssrA gene; the 2 termini fold to resemble tRNA(Ala) and it encodes a 'tag peptide', a short internal open reading frame. During trans-translation Ala-aminoacylated tmRNA acts like a tRNA, entering the A-site of stalled ribosomes, displacing the stalled mRNA. The ribosome then switches to translate the ORF on the tmRNA; the nascent peptide is terminated with the 'tag peptide' encoded by the tmRNA and targeted for degradation. The ribosome is freed to recommence translation, which seems to be the essential function of trans-translation. The chain is SsrA-binding protein from Sphingomonas elodea.